The primary structure comprises 643 residues: Sodium/iodide cotransporter (643 aa).

The Extracellular portion of the chain corresponds to 1-14 (MEAVETGERPTFGA). Residues 15-31 (WDYGVFALMLLVSTGIG) form a helical membrane-spanning segment. The Cytoplasmic segment spans residues 32-56 (LWVGLARGGQRSAEDFFTGGRRLAA). Residues 57-80 (LPVGLSLSASFMSAVQVLGVPSEA) form a discontinuously helical membrane-spanning segment. 3 residues coordinate Na(+): Ser-69, Val-71, and Gln-72. Val-76 serves as a coordination point for iodide. Residues 81 to 84 (YRYG) lie on the Extracellular side of the membrane. The chain crosses the membrane as a helical span at residues 85-105 (LKFLWMCLGQLLNSVLTALLF). Residue Met-90 coordinates iodide. Residues 106–130 (MPVFYRLGLTSTYEYLEMRFSRAVR) lie on the Cytoplasmic side of the membrane. The helical transmembrane segment at 131-157 (LCGTLQYIVATMLYTGIVIYAPALILN) threads the bilayer. Position 144 (Tyr-144) interacts with Na(+). The Extracellular segment spans residues 158 to 163 (QVTGLD). Residues 164–181 (IWASLLSTGIICTFYTAV) form a helical membrane-spanning segment. Topologically, residues 182–189 (GGMKAVVW) are cytoplasmic. A helical transmembrane segment spans residues 190-208 (TDVFQVVVMLSGFWVVLAR). Over 209–243 (GVMLVGGPRQVLTLAQNHSRINLMDFNPDPRSRYT) the chain is Extracellular. The chain crosses the membrane as a discontinuously helical span at residues 244–266 (FWTFVVGGTLVWLSMYGVNQAQV). Residue Trp-255 participates in iodide binding. Met-258 provides a ligand contact to Na(+). The Cytoplasmic segment spans residues 267-278 (QRYVACRTEKQA). A helical membrane pass occupies residues 279–301 (KLALLINQVGLFLIVSSAACCGI). Residues 302–335 (VMFVFYTDCDPLLLGRISAPDQYMPLLVLDIFED) lie on the Extracellular side of the membrane. The chain crosses the membrane as a helical span at residues 336-363 (LPGVPGLFLACAYSGTLSTASTSINAMA). Topologically, residues 364-386 (AVTVEDLIKPRLRSLAPRKLVII) are cytoplasmic. A helical transmembrane segment spans residues 387–408 (SKGLSLIYGSACLTVAALSSLL). Residues 409-411 (GGG) lie on the Extracellular side of the membrane. Residues 412–437 (VLQGSFTVMGVISGPLLGAFILGMFL) traverse the membrane as a helical segment. Residue Leu-413 participates in iodide binding. Na(+) is bound by residues Ser-416 and Phe-417. Phe-417 contributes to the iodide binding site. Residues 438–441 (PACN) lie on the Cytoplasmic side of the membrane. A helical membrane pass occupies residues 442 to 465 (TPGVLAGLGAGLALSLWVALGATL). Over 466-525 (YPPSEQTMRVLPSSAARCVALSVNASGLLDPALLPANDSSRAPSSGMDASRPALADSFYA) the chain is Extracellular. N-linked (GlcNAc...) asparagine glycosylation is found at Asn-489 and Asn-502. Residues 526–550 (ISYLYYGALGTLTTVLCGALISCLT) form a helical membrane-spanning segment. Residues 551–643 (GPTKRSTLAP…GGRDQQETNL (93 aa)) are Cytoplasmic-facing. Ser-556 is modified (phosphoserine; by PKA). Positions 623 to 643 (AGSWTPCVGHDGGRDQQETNL) are disordered. Basic and acidic residues predominate over residues 633–643 (DGGRDQQETNL).

Belongs to the sodium:solute symporter (SSF) (TC 2.A.21) family. Monomer. In terms of processing, glycosylated. As to expression, expression is primarily in thyroid tissue, but also to a lower extent in mammary gland and ovary. Expression is reduced in tumors.

It localises to the cell membrane. Its subcellular location is the cytoplasm. It carries out the reaction iodide(out) + 2 Na(+)(out) = iodide(in) + 2 Na(+)(in). The catalysed reaction is chlorate(out) + 2 Na(+)(out) = chlorate(in) + 2 Na(+)(in). The enzyme catalyses thiocyanate(out) + 2 Na(+)(out) = thiocyanate(in) + 2 Na(+)(in). It catalyses the reaction nitrate(out) + 2 Na(+)(out) = nitrate(in) + 2 Na(+)(in). It carries out the reaction selenocyanate(out) + 2 Na(+)(out) = selenocyanate(in) + 2 Na(+)(in). Its activity is regulated as follows. Dysidenin and perchlorate inhibit iodide transport activity. Oxyanions inhibit iodide transport activity by blocking the binding sites for iodide and one of the sodium ions. Sodium:iodide symporter that mediates the transport of iodide into the thyroid gland. Can also mediate the transport of chlorate, thiocynate, nitrate and selenocynate. The sequence is that of Sodium/iodide cotransporter (SLC5A5) from Homo sapiens (Human).